Consider the following 587-residue polypeptide: L-ascorbate oxidase (587 aa).

Residues 1–33 (MAKVADKPFFPKPFLSFLVLSIIFGFGITLSEA) form the signal peptide. 2 Plastocyanin-like domains span residues 38-157 (IKHY…LIVD) and 169-335 (DEEI…NYLP). 3 cysteine pairs are disulfide-bonded: Cys54/Cys236, Cys116/Cys574, and Cys215/Cys228. Residues His95, His97, His139, and His141 each coordinate Cu cation. Asn360, Asn401, and Asn475 each carry an N-linked (GlcNAc...) asparagine glycan. The Plastocyanin-like 3 domain maps to 379 to 559 (NRRLFLLNTQ…HMGMGVVFAE (181 aa)). Cu cation-binding residues include His480, His483, His485, His542, Cys543, His544, His548, and Met553.

The protein belongs to the multicopper oxidase family. In terms of assembly, dimer. Cu cation serves as cofactor.

It is found in the secreted. It carries out the reaction 4 L-ascorbate + O2 = 4 monodehydro-L-ascorbate radical + 2 H2O. May be involved in a redox system involving ascorbic acid. This Cucumis sativus (Cucumber) protein is L-ascorbate oxidase.